A 145-amino-acid chain; its full sequence is 3-dehydroquinate dehydratase (145 aa).

Tyr-23 serves as the catalytic Proton acceptor. Positions 74, 80, and 87 each coordinate substrate. Residue His-100 is the Proton donor of the active site. Substrate contacts are provided by residues 101-102 (IS) and Arg-111.

Belongs to the type-II 3-dehydroquinase family. As to quaternary structure, homododecamer.

The enzyme catalyses 3-dehydroquinate = 3-dehydroshikimate + H2O. It participates in metabolic intermediate biosynthesis; chorismate biosynthesis; chorismate from D-erythrose 4-phosphate and phosphoenolpyruvate: step 3/7. Catalyzes a trans-dehydration via an enolate intermediate. The protein is 3-dehydroquinate dehydratase of Mycobacterium leprae (strain Br4923).